We begin with the raw amino-acid sequence, 128 residues long: Large ribosomal subunit protein bL17 (128 aa).

The protein belongs to the bacterial ribosomal protein bL17 family. As to quaternary structure, part of the 50S ribosomal subunit. Contacts protein L32.

The protein is Large ribosomal subunit protein bL17 of Edwardsiella ictaluri (strain 93-146).